A 133-amino-acid chain; its full sequence is Large ribosomal subunit protein uL14 (133 aa).

It belongs to the universal ribosomal protein uL14 family. As to quaternary structure, part of the 50S ribosomal subunit. Forms a cluster with proteins L3 and L24e, part of which may contact the 16S rRNA in 2 intersubunit bridges.

In terms of biological role, binds to 23S rRNA. Forms part of two intersubunit bridges in the 70S ribosome. This Methanopyrus kandleri (strain AV19 / DSM 6324 / JCM 9639 / NBRC 100938) protein is Large ribosomal subunit protein uL14.